A 264-amino-acid polypeptide reads, in one-letter code: MKKISIHDLMKWKQEGKKFATVTAYDASFAQLFEQQEVPVLLVGDSLGMVLQGKSDTLPVTTEEIAYHTRCVRAGSPNSLVMADMPFMSYATPEQACENAGKLMQAGANMVKIEGGEWIAETVRILAERAVPVCAHLGLTPQSVNIFGGFRIQGRDEAKAEQMVKDALTLEAAGAQIILLECVPASLAERITKACTVPVIGIGAGNATDGQILVMHDMFGISANYMPKFSKNFLAETGDMRKAVTKYIQDVEQGTFPAAEHTFN.

Mg(2+) is bound by residues Asp-45 and Asp-84. 3-methyl-2-oxobutanoate contacts are provided by residues 45 to 46 (DS), Asp-84, and Lys-112. Glu-114 is a binding site for Mg(2+). The active-site Proton acceptor is the Glu-181.

It belongs to the PanB family. Homodecamer; pentamer of dimers. Mg(2+) serves as cofactor.

It is found in the cytoplasm. It catalyses the reaction 3-methyl-2-oxobutanoate + (6R)-5,10-methylene-5,6,7,8-tetrahydrofolate + H2O = 2-dehydropantoate + (6S)-5,6,7,8-tetrahydrofolate. Its pathway is cofactor biosynthesis; (R)-pantothenate biosynthesis; (R)-pantoate from 3-methyl-2-oxobutanoate: step 1/2. Functionally, catalyzes the reversible reaction in which hydroxymethyl group from 5,10-methylenetetrahydrofolate is transferred onto alpha-ketoisovalerate to form ketopantoate. The sequence is that of 3-methyl-2-oxobutanoate hydroxymethyltransferase from Aliivibrio fischeri (strain MJ11) (Vibrio fischeri).